A 232-amino-acid chain; its full sequence is Peroxisomal protein PEX21 (232 aa).

Residue cysteine 5 forms a Glycyl cysteine thioester (Cys-Gly) (interchain with G-Cter in ubiquitin) linkage.

The protein belongs to the peroxin-21 family. Interacts with PEX7. In terms of processing, monoubiquitinated at Cys-5; acts as a signal for PEX21 extraction and is required for proper export from peroxisomes and recycling.

The protein resides in the cytoplasm. It localises to the cytosol. The protein localises to the peroxisome. Its function is as follows. Mediates peroxisomal import of proteins containing a C-terminal PTS2-type peroxisomal targeting signal via its interaction with PEX7. Interaction with PEX7 only takes place when PEX7 is associated with cargo proteins containing a PTS2 peroxisomal targeting signal. PEX7 along with PTS2-containing cargo proteins are then translocated through the PEX13-PEX14 docking complex together with PEX21. The polypeptide is Peroxisomal protein PEX21 (PEX21) (Candida glabrata (strain ATCC 2001 / BCRC 20586 / JCM 3761 / NBRC 0622 / NRRL Y-65 / CBS 138) (Yeast)).